The chain runs to 244 residues: Ribonuclease 3 2 (244 aa).

Residues 11–136 form the RNase III domain; sequence LKALLRRLGL…LLGALYLSVG (126 aa). E50 is a binding site for Mg(2+). The active site involves D54. D122 and E125 together coordinate Mg(2+). E125 is a catalytic residue. One can recognise a DRBM domain in the interval 164 to 234; the sequence is NYKEALQAWT…AQQAYQDFIA (71 aa).

The protein belongs to the ribonuclease III family. As to quaternary structure, homodimer. It depends on Mg(2+) as a cofactor.

It is found in the cytoplasm. The catalysed reaction is Endonucleolytic cleavage to 5'-phosphomonoester.. Functionally, digests double-stranded RNA. Involved in the processing of primary rRNA transcript to yield the immediate precursors to the large and small rRNAs (23S and 16S). Processes some mRNAs, and tRNAs when they are encoded in the rRNA operon. Processes pre-crRNA and tracrRNA of type II CRISPR loci if present in the organism. In Synechocystis sp. (strain ATCC 27184 / PCC 6803 / Kazusa), this protein is Ribonuclease 3 2.